The following is a 338-amino-acid chain: Ketol-acid reductoisomerase (NADP(+)) (338 aa).

The region spanning 1-181 is the KARI N-terminal Rossmann domain; sequence MKVYYDKDAD…GGGKAGIIET (181 aa). NADP(+) contacts are provided by residues 24–27, Arg-47, and Ser-52; that span reads YGSQ. His-107 is a catalytic residue. Residue Gly-133 participates in NADP(+) binding. A KARI C-terminal knotted domain is found at 182 to 327; it reads NFREETETDL…EKLRAMMPWI (146 aa). Positions 190, 194, 226, and 230 each coordinate Mg(2+). Ser-251 contacts substrate.

Belongs to the ketol-acid reductoisomerase family. Mg(2+) is required as a cofactor.

The catalysed reaction is (2R)-2,3-dihydroxy-3-methylbutanoate + NADP(+) = (2S)-2-acetolactate + NADPH + H(+). It catalyses the reaction (2R,3R)-2,3-dihydroxy-3-methylpentanoate + NADP(+) = (S)-2-ethyl-2-hydroxy-3-oxobutanoate + NADPH + H(+). It participates in amino-acid biosynthesis; L-isoleucine biosynthesis; L-isoleucine from 2-oxobutanoate: step 2/4. It functions in the pathway amino-acid biosynthesis; L-valine biosynthesis; L-valine from pyruvate: step 2/4. Functionally, involved in the biosynthesis of branched-chain amino acids (BCAA). Catalyzes an alkyl-migration followed by a ketol-acid reduction of (S)-2-acetolactate (S2AL) to yield (R)-2,3-dihydroxy-isovalerate. In the isomerase reaction, S2AL is rearranged via a Mg-dependent methyl migration to produce 3-hydroxy-3-methyl-2-ketobutyrate (HMKB). In the reductase reaction, this 2-ketoacid undergoes a metal-dependent reduction by NADPH to yield (R)-2,3-dihydroxy-isovalerate. The protein is Ketol-acid reductoisomerase (NADP(+)) of Variovorax paradoxus (strain S110).